The sequence spans 346 residues: Very-long-chain 3-oxoacyl-CoA reductase (346 aa).

A helical membrane pass occupies residues 26 to 46 (TASVLLVAGGWFVVSRVWTFL). NADP(+) contacts are provided by Ile71, Asp126, Asp134, Asn153, Tyr220, Lys224, Ile253, and Ser255. Tyr220 serves as the catalytic Proton donor. Catalysis depends on Lys224, which acts as the Lowers pKa of active site Tyr.

It belongs to the short-chain dehydrogenases/reductases (SDR) family.

The protein localises to the endoplasmic reticulum membrane. The catalysed reaction is a very-long-chain (3R)-3-hydroxyacyl-CoA + NADP(+) = a very-long-chain 3-oxoacyl-CoA + NADPH + H(+). It functions in the pathway lipid metabolism; fatty acid biosynthesis. In terms of biological role, component of the microsomal membrane bound fatty acid elongation system, which produces the 26-carbon very long-chain fatty acids (VLCFA) from palmitate. Catalyzes the reduction of the 3-ketoacyl-CoA intermediate that is formed in each cycle of fatty acid elongation. VLCFAs serve as precursors for ceramide and sphingolipids. The polypeptide is Very-long-chain 3-oxoacyl-CoA reductase (Emericella nidulans (strain FGSC A4 / ATCC 38163 / CBS 112.46 / NRRL 194 / M139) (Aspergillus nidulans)).